A 337-amino-acid chain; its full sequence is Nicotinate-nucleotide--dimethylbenzimidazole phosphoribosyltransferase (337 aa).

E305 acts as the Proton acceptor in catalysis.

The protein belongs to the CobT family.

The catalysed reaction is 5,6-dimethylbenzimidazole + nicotinate beta-D-ribonucleotide = alpha-ribazole 5'-phosphate + nicotinate + H(+). It participates in nucleoside biosynthesis; alpha-ribazole biosynthesis; alpha-ribazole from 5,6-dimethylbenzimidazole: step 1/2. Functionally, catalyzes the synthesis of alpha-ribazole-5'-phosphate from nicotinate mononucleotide (NAMN) and 5,6-dimethylbenzimidazole (DMB). In Roseobacter denitrificans (strain ATCC 33942 / OCh 114) (Erythrobacter sp. (strain OCh 114)), this protein is Nicotinate-nucleotide--dimethylbenzimidazole phosphoribosyltransferase.